The following is a 444-amino-acid chain: NAD(P)-specific glutamate dehydrogenase (444 aa).

Residues Lys-88, Gln-109, and Lys-112 each contribute to the substrate site. The active-site Proton donor is the Lys-124. Substrate is bound at residue Gly-163. Residues Thr-207 and Asn-238 each contribute to the NADP(+) site. Ser-376 serves as a coordination point for substrate.

This sequence belongs to the Glu/Leu/Phe/Val dehydrogenases family. As to quaternary structure, homohexamer.

The catalysed reaction is L-glutamate + NAD(+) + H2O = 2-oxoglutarate + NH4(+) + NADH + H(+). It carries out the reaction L-glutamate + NADP(+) + H2O = 2-oxoglutarate + NH4(+) + NADPH + H(+). In terms of biological role, catalyzes the reversible oxidative deamination of glutamate to alpha-ketoglutarate and ammonia. P.ruminicola possess both NADP(H)- and NAD(H)-dependent activities on the same enzyme, suggesting that both anabolic and catabolic forms of the enzyme might occur. The polypeptide is NAD(P)-specific glutamate dehydrogenase (gdhA) (Xylanibacter ruminicola (Prevotella ruminicola)).